A 68-amino-acid polypeptide reads, in one-letter code: uncharacterized protein (68 aa).

An N-terminal signal peptide occupies residues 1–28; the sequence is MNKEQSADDPSVDLIRVKNMLNSTISMS.

This is an uncharacterized protein from Escherichia coli (strain K12).